We begin with the raw amino-acid sequence, 335 residues long: MSLDINQIALHQLIKRDEQNLELVLRDSLLEPTETVVEMVAELHRVYSAKNKAYGLFSEESELAQTLRLQRQGEEDFLAFSRAATGRLRDELAKYPFADGGFVLFCHYRYLAVEYLLVAVLSNLSSMRVNENLDINPTHYLDINHADIVARIDLTEWETNPESTRYLTFLKGRVGRKVADFFMDFLGASEGLNAKAQNRGLLQAVDDFTAEAQLDKAERQNVRQQVYSYCNEQLQAGEEIELESLSKELAGVSEVSFTKFAAEKGYELEESFPADRSTLRQLTKFAGSGGGLTINFDAMLLGERIFWDPATDTLTIKGTPPNLRDQLQRRTSGGN.

The protein belongs to the YejK family.

The protein localises to the cytoplasm. The protein resides in the nucleoid. The chain is Nucleoid-associated protein YejK from Shigella boydii serotype 18 (strain CDC 3083-94 / BS512).